The sequence spans 2799 residues: E3 ubiquitin-protein ligase UBR5 (2799 aa).

Position 2 is an N-acetylthreonine (threonine 2). A compositionally biased stretch (basic and acidic residues) spans aspartate 77–aspartate 88. The interval aspartate 77 to glutamine 175 is disordered. Over residues glycine 89 to serine 110 the composition is skewed to polar residues. Serine 110 bears the Phosphoserine mark. Positions glycine 135–serine 144 are enriched in gly residues. A UBA domain is found at valine 184–arginine 226. Serine 327 carries the post-translational modification Phosphoserine. The span at phenylalanine 328 to asparagine 347 shows a compositional bias: basic and acidic residues. Residues phenylalanine 328–serine 352 are disordered. A phosphoserine mark is found at serine 352 and serine 578. The disordered stretch occupies residues proline 579–glutamate 648. A compositionally biased stretch (basic and acidic residues) spans lysine 583–lysine 604. Phosphoserine is present on serine 612. A compositionally biased stretch (low complexity) spans alanine 614–serine 628. Phosphothreonine is present on threonine 637. A phosphoserine mark is found at serine 808, serine 928, and serine 1018. 2 disordered regions span residues alanine 999–proline 1031 and threonine 1052–valine 1075. Over residues valine 1017–proline 1031 the composition is skewed to pro residues. The segment covering threonine 1052–proline 1073 has biased composition (polar residues). A phosphothreonine mark is found at threonine 1115 and threonine 1135. A UBR-type zinc finger spans residues aspartate 1177–alanine 1245. Zn(2+) is bound by residues cysteine 1179, cysteine 1196, cysteine 1199, cysteine 1208, cysteine 1211, cysteine 1215, histidine 1216, and histidine 1219. Serine 1227 carries the phosphoserine modification. Cysteine 1232, cysteine 1234, and cysteine 1240 together coordinate Zn(2+). Residues arginine 1299–aspartate 1318 form a disordered region. Residues serine 1308, serine 1355, serine 1375, and serine 1481 each carry the phosphoserine modification. The segment at serine 1515–serine 1740 is disordered. Over residues serine 1524–serine 1537 the composition is skewed to low complexity. Residues tyrosine 1538 to proline 1553 are compositionally biased toward polar residues. Phosphoserine is present on serine 1549. Acidic residues-rich tracts occupy residues glutamate 1559–valine 1574 and histidine 1605–leucine 1614. Positions asparagine 1629–glycine 1638 are enriched in polar residues. 3 stretches are compositionally biased toward low complexity: residues serine 1641 to valine 1657, serine 1668 to serine 1681, and alanine 1726 to serine 1740. Residue threonine 1736 is modified to Phosphothreonine. A Phosphoserine modification is found at serine 1741. Tyrosine 1746 carries the post-translational modification Phosphotyrosine. Serine 1780 carries the post-translational modification Phosphoserine. The disordered stretch occupies residues leucine 1859–alanine 1890. Residues alanine 1879–alanine 1890 are compositionally biased toward basic and acidic residues. Threonine 1969 carries the phosphothreonine modification. The interval glycine 1984 to proline 2021 is disordered. A compositionally biased stretch (acidic residues) spans isoleucine 1985–threonine 1998. Serine 1990, serine 2026, and serine 2028 each carry phosphoserine. At threonine 2030 the chain carries Phosphothreonine. At serine 2076 the chain carries Phosphoserine. The segment at arginine 2117–histidine 2142 is disordered. The residue at position 2213 (threonine 2213) is a Phosphothreonine. 2 positions are modified to phosphoserine: serine 2241 and serine 2289. A disordered region spans residues histidine 2323 to alanine 2392. Basic and acidic residues-rich tracts occupy residues asparagine 2332–arginine 2348 and serine 2356–leucine 2368. Positions proline 2377–arginine 2454 constitute a PABC domain. The HECT domain occupies leucine 2462 to valine 2799. Serine 2469, serine 2484, and serine 2486 each carry phosphoserine. Residues valine 2473–aspartate 2493 are disordered. Cysteine 2768 acts as the Glycyl thioester intermediate in catalysis.

The protein belongs to the UBR5 family. In terms of assembly, homotetramer; composed of a dimer of dimers. Associates with CDK9 and TFIIS/TCEA1 and forms a transcription regulatory complex made of CDK9, RNAP II, UBR5 and TFIIS/TCEA1 that can stimulate target gene transcription (e.g. gamma fibrinogen/FGG) by recruiting their promoters. Associates with the E3 ligase complex containing DYRK2, EDD/UBR5, DDB1 and DCAF1 proteins (EDVP complex). Binds TOPBP1. Interacts with PIH1D1. Interacts with CIB1. (Microbial infection) Interacts with human T-cell leukemia virus 1/HTLV-1 protein HBZ; this interaction modulates HBZ stability. As to expression, widely expressed. Most abundant in testis and expressed at high levels in brain, pituitary and kidney.

It localises to the nucleus. The protein resides in the cytoplasm. The enzyme catalyses S-ubiquitinyl-[E2 ubiquitin-conjugating enzyme]-L-cysteine + [acceptor protein]-L-lysine = [E2 ubiquitin-conjugating enzyme]-L-cysteine + N(6)-ubiquitinyl-[acceptor protein]-L-lysine.. Its pathway is protein modification; protein ubiquitination. E3 ubiquitin-protein ligase involved in different protein quality control pathways in the cytoplasm and nucleus. Mainly acts as a ubiquitin chain elongator that extends pre-ubiquitinated substrates. Component of the N-end rule pathway: ubiquitinates proteins bearing specific N-terminal residues that are destabilizing according to the N-end rule, leading to their degradation. Recognizes type-1 N-degrons, containing positively charged amino acids (Arg, Lys and His). Together with UBR4, part of a cytoplasm protein quality control pathway that prevents protein aggregation by catalyzing assembly of heterotypic 'Lys-11'-/'Lys-48'-linked branched ubiquitin chains on aggregated proteins, leading to substrate recognition by the segregase p97/VCP and degradation by the proteasome: UBR5 is probably branching multiple 'Lys-48'-linked chains of substrates initially modified with mixed conjugates by UBR4. Together with ITCH, catalyzes 'Lys-48'-/'Lys-63'-branched ubiquitination of TXNIP, leading to its degradation: UBR5 mediates branching of 'Lys-48'-linked chains of substrates initially modified with 'Lys-63'-linked conjugates by ITCH. Catalytic component of a nuclear protein quality control pathway that mediates ubiquitination and degradation of unpaired transcription factors (i.e. transcription factors that are not assembled into functional multiprotein complexes): specifically recognizes and binds degrons that are not accessible when transcription regulators are associated with their coactivators. Ubiquitinates various unpaired transcription regulator (MYC, SUPT4H1, SUPT5H, CDC20 and MCRS1), as well as ligand-bound nuclear receptors (ESR1, NR1H3, NR3C1, PGR, RARA, RXRA AND VDR) that are not associated with their nuclear receptor coactivators (NCOAs). Involved in maturation and/or transcriptional regulation of mRNA by mediating polyubiquitination and activation of CDK9. Also acts as a regulator of DNA damage response by acting as a suppressor of RNF168, an E3 ubiquitin-protein ligase that promotes accumulation of 'Lys-63'-linked histone H2A and H2AX at DNA damage sites, thereby acting as a guard against excessive spreading of ubiquitinated chromatin at damaged chromosomes. Regulates DNA topoisomerase II binding protein (TopBP1) in the DNA damage response. Ubiquitinates acetylated PCK1. Acts as a positive regulator of the canonical Wnt signaling pathway by mediating (1) ubiquitination and stabilization of CTNNB1, and (2) 'Lys-48'-linked ubiquitination and degradation of TLE3. Promotes disassembly of the mitotic checkpoint complex (MCC) from the APC/C complex by catalyzing ubiquitination of BUB1B, BUB3 and CDC20. Plays an essential role in extraembryonic development. Required for the maintenance of skeletal tissue homeostasis by acting as an inhibitor of hedgehog (HH) signaling. The sequence is that of E3 ubiquitin-protein ligase UBR5 (UBR5) from Homo sapiens (Human).